Reading from the N-terminus, the 99-residue chain is NADH-quinone oxidoreductase subunit K (99 aa).

Transmembrane regions (helical) follow at residues 3–23 (PANY…GVLV), 28–48 (IVVF…LVTF), and 62–82 (FFVM…ILAI).

Belongs to the complex I subunit 4L family. In terms of assembly, NDH-1 is composed of 14 different subunits. Subunits NuoA, H, J, K, L, M, N constitute the membrane sector of the complex.

The protein localises to the cell membrane. The enzyme catalyses a quinone + NADH + 5 H(+)(in) = a quinol + NAD(+) + 4 H(+)(out). NDH-1 shuttles electrons from NADH, via FMN and iron-sulfur (Fe-S) centers, to quinones in the respiratory chain. The immediate electron acceptor for the enzyme in this species is believed to be a menaquinone. Couples the redox reaction to proton translocation (for every two electrons transferred, four hydrogen ions are translocated across the cytoplasmic membrane), and thus conserves the redox energy in a proton gradient. The sequence is that of NADH-quinone oxidoreductase subunit K from Parafrankia sp. (strain EAN1pec).